We begin with the raw amino-acid sequence, 288 residues long: Elongation factor Ts (288 aa).

An involved in Mg(2+) ion dislocation from EF-Tu region spans residues 79-82 (TDFV).

The protein belongs to the EF-Ts family.

It localises to the cytoplasm. Its function is as follows. Associates with the EF-Tu.GDP complex and induces the exchange of GDP to GTP. It remains bound to the aminoacyl-tRNA.EF-Tu.GTP complex up to the GTP hydrolysis stage on the ribosome. In Ehrlichia ruminantium (strain Gardel), this protein is Elongation factor Ts.